We begin with the raw amino-acid sequence, 586 residues long: Phosphatidylinositol-3-phosphatase SAC1-A (586 aa).

Over 1–519 the chain is Cytoplasmic; that stretch reads MANAYERFNL…TPLHVKKDWK (519 aa). The SAC domain occupies 121–450; the sequence is INNVLNTDGF…ANACAKQYAG (330 aa). An essential for phosphatidylinositol-4-phosphate phosphatase activity region spans residues 451-586; sequence TGALKTDFTR…PKLVQKEKMD (136 aa). Residues 520–540 form a helical membrane-spanning segment; sequence FLLLPVIMVVAFSMCIICLLM. Residues 541-547 lie on the Lumenal side of the membrane; that stretch reads AGDTWTE. Residues 548-568 traverse the membrane as a helical segment; that stretch reads TLAYVLFWGMASALTAAVIVV. Residues 569–586 are Cytoplasmic-facing; it reads NGREFVDAPKLVQKEKMD.

The protein localises to the endoplasmic reticulum membrane. The protein resides in the golgi apparatus membrane. The enzyme catalyses a 1,2-diacyl-sn-glycero-3-phospho-(1D-myo-inositol-3-phosphate) + H2O = a 1,2-diacyl-sn-glycero-3-phospho-(1D-myo-inositol) + phosphate. It catalyses the reaction a 1,2-diacyl-sn-glycero-3-phospho-(1D-myo-inositol 4-phosphate) + H2O = a 1,2-diacyl-sn-glycero-3-phospho-(1D-myo-inositol) + phosphate. Phosphoinositide phosphatase which catalyzes the hydrolysis of phosphatidylinositol 4-phosphate (PtdIns(4)P), phosphatidylinositol 3-phosphate (PtdIns(3)P) and has low activity towards phosphatidylinositol-3,5-bisphosphate (PtdIns(3,5)P2). In Danio rerio (Zebrafish), this protein is Phosphatidylinositol-3-phosphatase SAC1-A (sacm1la).